The primary structure comprises 158 residues: Sorbin and SH3 domain-containing protein 2 (158 aa).

The 46-residue stretch at 1 to 46 (MRAATPLQTVDRPKDWYKTMFKQIHMVHKPDDDTDMYNTPYTYNAG) folds into the SoHo domain. Positions 28–158 (HKPDDDTDMY…TKPQAGRRKV (131 aa)) are disordered. Polar residues predominate over residues 50 to 66 (SPYSAQSHPAAKTQTYR). Residues 71 to 81 (SHSDNGTDAFK) show a composition bias toward basic and acidic residues. Phosphoserine is present on serine 73. The segment covering 86-99 (PVPPPHVPPPVPPL) has biased composition (pro residues). Basic and acidic residues predominate over residues 100 to 136 (RPRDRSSTEKHDWDPPDRKVDTRKFRSEPRSIFEYEP). Alanine 153 carries the post-translational modification Alanine amide.

In terms of assembly, interacts with ABL1/c-Abl, ABL2/v-Abl/Arg, ACTN, AKT1, CBL, PALLD and PAK1. Interacts with ABL, CBL, DNM1, DNM2, FLOT1, AFDN, PTK2B/PYK2, SAPAP, SPTAN1, SYNJ1, SYNJ2, VCL/vinculin, and WASF. Interacts with PTPN12 and WASF1 via its SH3 domains; this interaction may mediate the partial PTPN12 and WASF1 translocation to focal adhesion sites. Ubiquitinated by CBL. In terms of processing, dephosphorylated by PTPN12. Expressed in duodenum.

Its subcellular location is the cytoplasm. It localises to the perinuclear region. It is found in the apical cell membrane. The protein resides in the cell junction. The protein localises to the focal adhesion. Its subcellular location is the cell projection. It localises to the lamellipodium. Its function is as follows. Adapter protein that plays a role in the assembling of signaling complexes, being a link between ABL kinases and actin cytoskeleton. Can form complex with ABL1 and CBL, thus promoting ubiquitination and degradation of ABL1 or with AKT1 and PAK1, thus mediating AKT1-mediated activation of PAK1. May play a role in the regulation of pancreatic cell adhesion, possibly by acting on WASF1 phosphorylation, enhancing phosphorylation by ABL1, as well as dephosphorylation by PTPN12. Increases water and sodium absorption in the intestine and gall-bladder. The protein is Sorbin and SH3 domain-containing protein 2 (SORBS2) of Sus scrofa (Pig).